Reading from the N-terminus, the 1239-residue chain is Structural polyprotein (1239 aa).

The tract at residues 15–95 (RPAPVQRYIP…KKKSKPGKRM (81 aa)) is disordered. The interval 36 to 62 (RGPSQLQQLVAALGALALQPKQKQKRA) is host transcription inhibition. Residues 38 to 56 (PSQLQQLVAALGALALQPK) show a composition bias toward low complexity. The short motif at 55–91 (PKQKQKRAQKKPKKTPPPKPKKTQKPKKPTQKKKSKP) is the Nuclear localization signal element. The span at 57–95 (QKQKRAQKKPKKTPPPKPKKTQKPKKPTQKKKSKPGKRM) shows a compositional bias: basic residues. The interval 78–106 (QKPKKPTQKKKSKPGKRMRNCMKIENDCI) is binding to the viral RNA. A ribosome-binding region spans residues 91 to 105 (PGKRMRNCMKIENDC). Cysteines 105 and 120 form a disulfide. Residues 105-253 (CIFPVMLDGK…RITPEESVEW (149 aa)) enclose the Peptidase S3 domain. H131 serves as the catalytic Charge relay system. The Nuclear export signal motif lies at 136 to 146 (IDNPELAKLTF). The tract at residues 147–152 (KKSSKY) is interaction with spike glycoprotein E2. The Charge relay system role is filled by D153. Residues 175-185 (PEGHYNWHHGA) are dimerization of the capsid protein. Residue S205 is the Charge relay system of the active site. The tract at residues 211–215 (DNTGK) is dimerization of the capsid protein. The segment at 254–269 (SAAALNITALCVLQNL) is functions as an uncleaved signal peptide for the precursor of protein E3/E2. Disulfide bonds link C264–C273, C278–C282, C281–C313, C339–C443, C342–C348, C411–C425, C471–C585, C519–C545, and C521–C539. N268 carries an N-linked (GlcNAc...) asparagine; by host glycan. The Extracellular portion of the chain corresponds to 322–686 (SVAHFEAYKA…HYYDLYPYWT (365 aa)). A helical membrane pass occupies residues 687–707 (ITVLASLGLLIVISSGFSCFL). 2 S-palmitoyl cysteine; by host lipidation sites follow: C705 and C708. Over 708 to 751 (CSVARTKCLTPYQLAPGAQLPTFIALLCCAKSARADTLDDFSYL) the chain is Cytoplasmic. The interval 710-714 (VARTK) is interaction with the capsid protein. S-palmitoyl cysteine; by host attachment occurs at residues C715, C735, and C736. The cysteines at positions 715 and 736 are disulfide-linked. At 752 to 756 (WTNNQ) the chain is on the extracellular side. A helical transmembrane segment spans residues 757-777 (AMFWLQLASPVAAFLCLSYCC). Topologically, residues 778–779 (RN) are cytoplasmic. Residues 780 to 800 (LACCMKIFLGISGLCVIATQA) traverse the membrane as a helical segment. The Extracellular segment spans residues 801 to 1216 (YEHSTTMPNQ…WQWLAHTTSG (416 aa)). 4 cysteine pairs are disulfide-bonded: C849/C914, C862/C894, C863/C896, and C868/C878. Positions 884 to 901 (VYPFMWGGAYCFCDTENS) are E1 fusion peptide loop. 3 N-linked (GlcNAc...) asparagine; by host glycosylation sites follow: N941, N1009, and N1070. 4 disulfide bridges follow: C1059–C1071, C1101–C1176, C1106–C1180, and C1128–C1170. A helical membrane pass occupies residues 1217–1237 (PLTILVVAIIVVVVVSIVVCA). C1236 carries S-palmitoyl cysteine; by host lipidation. The Cytoplasmic segment spans residues 1238–1239 (RH).

As to quaternary structure, homodimer. Homomultimer. Interacts with host karyopherin KPNA4; this interaction allows the nuclear import of the viral capsid protein. Interacts with spike glycoprotein E2. Interacts with host IRAK1; the interaction leads to inhibition of IRAK1-dependent signaling. In terms of assembly, the precursor of protein E3/E2 and E1 form a heterodimer shortly after synthesis. Interacts with spike glycoprotein E1. The precursor of protein E3/E2 and E1 form a heterodimer shortly after synthesis. Processing of the precursor of protein E3/E2 into E2 and E3 results in a heterodimer of the spike glycoproteins E2 and E1. Spike at virion surface are constituted of a trimer of E2-E1 heterodimers. After target cell attachment and endocytosis, E1 change conformation to form homotrimers. Interacts with 6K protein. As to quaternary structure, interacts with spike glycoprotein E1. Processing of the precursor of protein E3/E2 into E2 and E3 results in a heterodimer of the spike glycoproteins E2 and E1. Spike at virion surface are constituted of a trimer of E2-E1 heterodimers. Interacts with 6K protein. Interacts with host MXRA8; this interaction mediates virus entry. Interacts with the capsid protein. In terms of assembly, oligomer. Interacts with spike glycoprotein E1. Interacts with spike glycoprotein E2. Post-translationally, structural polyprotein: Specific enzymatic cleavages in vivo yield mature proteins. Capsid protein is auto-cleaved during polyprotein translation, unmasking a signal peptide at the N-terminus of the precursor of E3/E2. The remaining polyprotein is then targeted to the host endoplasmic reticulum, where host signal peptidase cleaves it into pE2, 6K and E1 proteins. pE2 is further processed to mature E3 and E2 by host furin in trans-Golgi vesicle. In terms of processing, palmitoylated via thioester bonds. These palmitoylations may induce disruption of the C-terminus transmembrane. This would result in the reorientation of E2 C-terminus from lumenal to cytoplasmic side. N-glycosylated. Post-translationally, palmitoylated via thioester bonds.

Its subcellular location is the virion. It localises to the host cytoplasm. It is found in the host cell membrane. The protein localises to the host nucleus. The protein resides in the virion membrane. Its subcellular location is the host Golgi apparatus. It localises to the host trans-Golgi network. It is found in the host endoplasmic reticulum. It catalyses the reaction Autocatalytic release of the core protein from the N-terminus of the togavirus structural polyprotein by hydrolysis of a -Trp-|-Ser- bond.. In terms of biological role, forms an icosahedral capsid with a T=4 symmetry composed of 240 copies of the capsid protein surrounded by a lipid membrane through which penetrate 80 spikes composed of trimers of E1-E2 heterodimers. The capsid protein binds to the viral RNA genome at a site adjacent to a ribosome binding site for viral genome translation following genome release. Possesses a protease activity that results in its autocatalytic cleavage from the nascent structural protein. Following its self-cleavage, the capsid protein transiently associates with ribosomes, and within several minutes the protein binds to viral RNA and rapidly assembles into icosahedric core particles. The resulting nucleocapsid eventually associates with the cytoplasmic domain of the spike glycoprotein E2 at the cell membrane, leading to budding and formation of mature virions. In case of infection, new virions attach to target cells and after clathrin-mediated endocytosis their membrane fuses with the host endosomal membrane. This leads to the release of the nucleocapsid into the cytoplasm, followed by an uncoating event necessary for the genomic RNA to become accessible. The uncoating might be triggered by the interaction of capsid proteins with ribosomes. Binding of ribosomes would release the genomic RNA since the same region is genomic RNA-binding and ribosome-binding. Specifically inhibits interleukin-1 receptor-associated kinase 1/IRAK1-dependent signaling during viral entry, representing a means by which the alphaviruses may evade innate immune detection and activation prior to viral gene expression. Provides the signal sequence for the translocation of the precursor of protein E3/E2 to the host endoplasmic reticulum. Furin-cleaved E3 remains associated with spike glycoprotein E1 and mediates pH protection of the latter during the transport via the secretory pathway. After virion release from the host cell, the assembly protein E3 is gradually released in the extracellular space. Its function is as follows. Plays a role in viral attachment to target host cell, by binding to the cell receptor MXRA8. Synthesized as a p62 precursor which is processed by furin at the cell membrane just before virion budding, giving rise to E2-E1 heterodimer. The p62-E1 heterodimer is stable, whereas E2-E1 is unstable and dissociate at low pH. p62 is processed at the last step, presumably to avoid E1 fusion activation before its final export to cell surface. E2 C-terminus contains a transitory transmembrane that would be disrupted by palmitoylation, resulting in reorientation of the C-terminal tail from lumenal to cytoplasmic side. This step is critical since E2 C-terminus is involved in budding by interacting with capsid proteins. This release of E2 C-terminus in cytoplasm occurs lately in protein export, and precludes premature assembly of particles at the endoplasmic reticulum membrane. Functionally, acts as a viroporin that participates in virus glycoprotein processing and transport to the plasma membrane, cell permeabilization and budding of viral particles. The cation channel is permeable to Na(+)&gt;K(+)&gt;Ca(2+) in vitro. Disrupts the calcium homeostasis of the cell, probably at the endoplasmic reticulum level. This leads to cytoplasmic calcium elevation. Because of its lipophilic properties, the 6K protein is postulated to influence the selection of lipids that interact with the transmembrane domains of the glycoproteins, which, in turn, affects the deformability of the bilayer required for the extreme curvature that occurs as budding proceeds. Present in low amount in virions, about 3% compared to viral glycoproteins. In terms of biological role, class II viral fusion protein. Fusion activity is inactive as long as E1 is bound to E2 in mature virion. After virus attachment to target cell via host MXRA8 and endocytosis, acidification of the endosome induce dissociation of E1/E2 heterodimer and concomitant trimerization of the E1 subunits. This E1 trimer is fusion active, and promotes release of viral nucleocapsid in cytoplasm after endosome and viral membrane fusion. Efficient fusion requires the presence of cholesterol and sphingolipid in the target membrane. The sequence is that of Structural polyprotein from Anopheles amictus (Common banded mosquito).